The following is a 129-amino-acid chain: Large ribosomal subunit protein bL20 (129 aa).

This sequence belongs to the bacterial ribosomal protein bL20 family.

Its function is as follows. Binds directly to 23S ribosomal RNA and is necessary for the in vitro assembly process of the 50S ribosomal subunit. It is not involved in the protein synthesizing functions of that subunit. The protein is Large ribosomal subunit protein bL20 of Mycobacteroides abscessus (strain ATCC 19977 / DSM 44196 / CCUG 20993 / CIP 104536 / JCM 13569 / NCTC 13031 / TMC 1543 / L948) (Mycobacterium abscessus).